The chain runs to 364 residues: Putative apoptosis inhibitor ORF42 (364 aa).

One copy of the BIR 1 repeat lies at 24–89 (RLATFRGYEY…CREGVVSAPQ (66 aa)). A disordered region spans residues 83–126 (GVVSAPQQQPPPPPSTSIGAVGGDPRPEDMNVPERGWDPPMSKD). The segment covering 117–126 (RGWDPPMSKD) has biased composition (basic and acidic residues). 2 BIR repeats span residues 127 to 193 (PKST…PLVV) and 236 to 300 (RIAS…ANMA). The segment at 315 to 350 (CVICLGAKADTILKPCLHYSLCYGCSTQVQKCPLCR) adopts an RING-type zinc-finger fold.

In terms of biological role, may act as an apoptosis inhibitor. In Magallana gigas (Pacific oyster), this protein is Putative apoptosis inhibitor ORF42.